The chain runs to 478 residues: Proline--tRNA ligase (478 aa).

It belongs to the class-II aminoacyl-tRNA synthetase family. ProS type 3 subfamily. Homodimer.

It is found in the cytoplasm. It catalyses the reaction tRNA(Pro) + L-proline + ATP = L-prolyl-tRNA(Pro) + AMP + diphosphate. In terms of biological role, catalyzes the attachment of proline to tRNA(Pro) in a two-step reaction: proline is first activated by ATP to form Pro-AMP and then transferred to the acceptor end of tRNA(Pro). This chain is Proline--tRNA ligase, found in Clostridium botulinum (strain 657 / Type Ba4).